Consider the following 1370-residue polypeptide: DNA-directed RNA polymerase subunit beta (1370 aa).

The protein belongs to the RNA polymerase beta chain family. In terms of assembly, the RNAP catalytic core consists of 2 alpha, 1 beta, 1 beta' and 1 omega subunit. When a sigma factor is associated with the core the holoenzyme is formed, which can initiate transcription.

The enzyme catalyses RNA(n) + a ribonucleoside 5'-triphosphate = RNA(n+1) + diphosphate. DNA-dependent RNA polymerase catalyzes the transcription of DNA into RNA using the four ribonucleoside triphosphates as substrates. This Bordetella avium (strain 197N) protein is DNA-directed RNA polymerase subunit beta.